The sequence spans 84 residues: Cytochrome b559 subunit alpha (84 aa).

Residues valine 22–tryptophan 36 form a helical membrane-spanning segment. Histidine 24 lines the heme pocket.

Belongs to the PsbE/PsbF family. As to quaternary structure, heterodimer of an alpha subunit and a beta subunit. PSII is composed of 1 copy each of membrane proteins PsbA, PsbB, PsbC, PsbD, PsbE, PsbF, PsbH, PsbI, PsbJ, PsbK, PsbL, PsbM, PsbT, PsbX, PsbY, PsbZ, Psb30/Ycf12, at least 3 peripheral proteins of the oxygen-evolving complex and a large number of cofactors. It forms dimeric complexes. Requires heme b as cofactor.

Its subcellular location is the plastid. The protein localises to the chloroplast thylakoid membrane. Functionally, this b-type cytochrome is tightly associated with the reaction center of photosystem II (PSII). PSII is a light-driven water:plastoquinone oxidoreductase that uses light energy to abstract electrons from H(2)O, generating O(2) and a proton gradient subsequently used for ATP formation. It consists of a core antenna complex that captures photons, and an electron transfer chain that converts photonic excitation into a charge separation. This is Cytochrome b559 subunit alpha from Porphyra purpurea (Red seaweed).